A 141-amino-acid chain; its full sequence is Large ribosomal subunit protein uL11 (141 aa).

The protein belongs to the universal ribosomal protein uL11 family. In terms of assembly, part of the ribosomal stalk of the 50S ribosomal subunit. Interacts with L10 and the large rRNA to form the base of the stalk. L10 forms an elongated spine to which L12 dimers bind in a sequential fashion forming a multimeric L10(L12)X complex. Post-translationally, one or more lysine residues are methylated.

Forms part of the ribosomal stalk which helps the ribosome interact with GTP-bound translation factors. This Roseiflexus sp. (strain RS-1) protein is Large ribosomal subunit protein uL11.